The sequence spans 57 residues: Conotoxin Cal6.34 (57 aa).

The signal sequence occupies residues 1–22 (MKLTCVLIVAVLILTACQVIAA). Intrachain disulfides connect Cys-26/Cys-37, Cys-29/Cys-43, and Cys-36/Cys-54.

The protein belongs to the conotoxin O1 superfamily. Expressed by the venom duct.

It is found in the secreted. Its function is as follows. Probable neurotoxin. In Californiconus californicus (California cone), this protein is Conotoxin Cal6.34.